The sequence spans 350 residues: Holliday junction branch migration complex subunit RuvB (350 aa).

Residues 4 to 184 (ADRIVTASSR…FGIVQRLEFY (181 aa)) form a large ATPase domain (RuvB-L) region. Residues isoleucine 23, arginine 24, glycine 65, lysine 68, threonine 69, threonine 70, 131–133 (EDF), arginine 174, tyrosine 184, and arginine 221 contribute to the ATP site. Threonine 69 is a Mg(2+) binding site. The segment at 185–255 (STEDLATIVR…IADLALNMLD (71 aa)) is small ATPAse domain (RuvB-S). Residues 258-350 (ERGFDHQDRR…TPDLFEGDIV (93 aa)) form a head domain (RuvB-H) region. Positions 294, 313, and 318 each coordinate DNA.

It belongs to the RuvB family. In terms of assembly, homohexamer. Forms an RuvA(8)-RuvB(12)-Holliday junction (HJ) complex. HJ DNA is sandwiched between 2 RuvA tetramers; dsDNA enters through RuvA and exits via RuvB. An RuvB hexamer assembles on each DNA strand where it exits the tetramer. Each RuvB hexamer is contacted by two RuvA subunits (via domain III) on 2 adjacent RuvB subunits; this complex drives branch migration. In the full resolvosome a probable DNA-RuvA(4)-RuvB(12)-RuvC(2) complex forms which resolves the HJ.

The protein localises to the cytoplasm. The enzyme catalyses ATP + H2O = ADP + phosphate + H(+). Functionally, the RuvA-RuvB-RuvC complex processes Holliday junction (HJ) DNA during genetic recombination and DNA repair, while the RuvA-RuvB complex plays an important role in the rescue of blocked DNA replication forks via replication fork reversal (RFR). RuvA specifically binds to HJ cruciform DNA, conferring on it an open structure. The RuvB hexamer acts as an ATP-dependent pump, pulling dsDNA into and through the RuvAB complex. RuvB forms 2 homohexamers on either side of HJ DNA bound by 1 or 2 RuvA tetramers; 4 subunits per hexamer contact DNA at a time. Coordinated motions by a converter formed by DNA-disengaged RuvB subunits stimulates ATP hydrolysis and nucleotide exchange. Immobilization of the converter enables RuvB to convert the ATP-contained energy into a lever motion, pulling 2 nucleotides of DNA out of the RuvA tetramer per ATP hydrolyzed, thus driving DNA branch migration. The RuvB motors rotate together with the DNA substrate, which together with the progressing nucleotide cycle form the mechanistic basis for DNA recombination by continuous HJ branch migration. Branch migration allows RuvC to scan DNA until it finds its consensus sequence, where it cleaves and resolves cruciform DNA. In Stutzerimonas stutzeri (strain A1501) (Pseudomonas stutzeri), this protein is Holliday junction branch migration complex subunit RuvB.